The following is a 336-amino-acid chain: 4-hydroxy-3-methylbut-2-enyl diphosphate reductase (336 aa).

Residue cysteine 37 coordinates [4Fe-4S] cluster. (2E)-4-hydroxy-3-methylbut-2-enyl diphosphate is bound by residues histidine 66 and histidine 99. 2 residues coordinate dimethylallyl diphosphate: histidine 66 and histidine 99. 2 residues coordinate isopentenyl diphosphate: histidine 66 and histidine 99. Residue cysteine 121 coordinates [4Fe-4S] cluster. Histidine 149 provides a ligand contact to (2E)-4-hydroxy-3-methylbut-2-enyl diphosphate. Histidine 149 contributes to the dimethylallyl diphosphate binding site. Residue histidine 149 coordinates isopentenyl diphosphate. Glutamate 151 functions as the Proton donor in the catalytic mechanism. Threonine 189 contributes to the (2E)-4-hydroxy-3-methylbut-2-enyl diphosphate binding site. Position 219 (cysteine 219) interacts with [4Fe-4S] cluster. (2E)-4-hydroxy-3-methylbut-2-enyl diphosphate contacts are provided by serine 247, serine 248, asparagine 249, and serine 292. Residues serine 247, serine 248, asparagine 249, and serine 292 each coordinate dimethylallyl diphosphate. Isopentenyl diphosphate contacts are provided by serine 247, serine 248, asparagine 249, and serine 292.

The protein belongs to the IspH family. [4Fe-4S] cluster serves as cofactor.

It catalyses the reaction isopentenyl diphosphate + 2 oxidized [2Fe-2S]-[ferredoxin] + H2O = (2E)-4-hydroxy-3-methylbut-2-enyl diphosphate + 2 reduced [2Fe-2S]-[ferredoxin] + 2 H(+). The enzyme catalyses dimethylallyl diphosphate + 2 oxidized [2Fe-2S]-[ferredoxin] + H2O = (2E)-4-hydroxy-3-methylbut-2-enyl diphosphate + 2 reduced [2Fe-2S]-[ferredoxin] + 2 H(+). It participates in isoprenoid biosynthesis; dimethylallyl diphosphate biosynthesis; dimethylallyl diphosphate from (2E)-4-hydroxy-3-methylbutenyl diphosphate: step 1/1. The protein operates within isoprenoid biosynthesis; isopentenyl diphosphate biosynthesis via DXP pathway; isopentenyl diphosphate from 1-deoxy-D-xylulose 5-phosphate: step 6/6. In terms of biological role, catalyzes the conversion of 1-hydroxy-2-methyl-2-(E)-butenyl 4-diphosphate (HMBPP) into a mixture of isopentenyl diphosphate (IPP) and dimethylallyl diphosphate (DMAPP). Acts in the terminal step of the DOXP/MEP pathway for isoprenoid precursor biosynthesis. The sequence is that of 4-hydroxy-3-methylbut-2-enyl diphosphate reductase from Rhodococcus jostii (strain RHA1).